A 594-amino-acid polypeptide reads, in one-letter code: Sodium-dependent glucose transporter 1 (594 aa).

Transmembrane regions (helical) follow at residues 77–97 (WLVS…ISVL), 115–137 (LSYI…GILF), 144–161 (LLLG…SGTP), 166–186 (AWVL…LDTG), 205–225 (ALHF…KLLF), 269–289 (IVIG…YFCI), 311–331 (TLII…VAYG), 349–371 (AAGL…IFFA), 393–413 (LLCL…LYGI), 439–459 (IFVV…GFLL), and 467–487 (LLMY…PVLY).

This sequence belongs to the major facilitator superfamily.

Its subcellular location is the apical cell membrane. Functionally, may function as a sodium-dependent glucose transporter. Potential channels for urea in the inner medulla of kidney. The polypeptide is Sodium-dependent glucose transporter 1 (mfsd4b) (Danio rerio (Zebrafish)).